The sequence spans 213 residues: Uridine kinase (213 aa).

15–22 (GASASGKS) serves as a coordination point for ATP.

The protein belongs to the uridine kinase family.

The protein resides in the cytoplasm. It carries out the reaction uridine + ATP = UMP + ADP + H(+). The enzyme catalyses cytidine + ATP = CMP + ADP + H(+). The protein operates within pyrimidine metabolism; CTP biosynthesis via salvage pathway; CTP from cytidine: step 1/3. It participates in pyrimidine metabolism; UMP biosynthesis via salvage pathway; UMP from uridine: step 1/1. The polypeptide is Uridine kinase (Pectobacterium carotovorum subsp. carotovorum (strain PC1)).